The primary structure comprises 130 residues: MAKVPSRSPRKRVRKQVADGMAHIHASFNNTIVTITDRQGNALSWATSGGSGFRGSRKSTPFAAQVAAERAGIAAQDYGVKNLEVFVKGPGPGRESAIRALNAVGYKITNITDVTPIPHNGCRPPKKRRV.

It belongs to the universal ribosomal protein uS11 family. As to quaternary structure, part of the 30S ribosomal subunit. Interacts with proteins S7 and S18. Binds to IF-3.

Functionally, located on the platform of the 30S subunit, it bridges several disparate RNA helices of the 16S rRNA. Forms part of the Shine-Dalgarno cleft in the 70S ribosome. The sequence is that of Small ribosomal subunit protein uS11 from Shewanella frigidimarina (strain NCIMB 400).